The sequence spans 494 residues: MTNWQQQLPLTDTQKNELDKSVLRYLNWNYKQTVRHEHAQDYESVRHAIVTLSGFLLQESVDRQEFISNNDTSNESMVDIDELLLPKKWNSIVRLQKKIIELEQNTETLVSQIKDLNTQVSELAQFKPTTSNGTSAHNVLKWIPRNLPSCLINVESSVTSVKLHPNLPIVFVATDHGKLYAFDLFNYTIPLASLQSHTKAITSMDVLFTNYTNSSKKNYLVIVTASKDLQIHVFKWVSEECKFQQIRSLLGHEHIVSAVKIWQKNNDVHIASCSRDQTVKIWDFHNGWSLKTFQPHSQWVRSIDVLGDYIISGSHDTTLRLTHWPSGNGLSVGTGHEFPIEKVKFIHFIEDSPEIRFRTPSTDRYKNWGMQYCVSASRDRTIKIWEIPLPTLMAHRAPIPNPTDSNFRCVLTLKGHLSWVRDISIRGQYLFSCADDKSVRCWDLNTGQCLHVWEKLHTGFVNCLDLDVDFDSNVTPRQMMVTGGLDCKSNVFMR.

Residues 14–46 form the LisH domain; that stretch reads QKNELDKSVLRYLNWNYKQTVRHEHAQDYESVR. Residues 90–123 are a coiled coil; that stretch reads NSIVRLQKKIIELEQNTETLVSQIKDLNTQVSEL. WD repeat units follow at residues 153-192, 196-244, 251-292, 295-334, 347-395, 415-454, and 457-492; these read NVESSVTSVKLHPNLPIVFVATDHGKLYAFDLFNYTIPLA, SHTK…CKFQ, GHEH…SLKT, PHSQWVRSIDVLGDYIISGSHDTTLRLTHWPSGNGLSVGT, HFIE…LMAH, GHLSWVRDISIRGQYLFSCADDKSVRCWDLNTGQCLHVWE, and HTGFVNCLDLDVDFDSNVTPRQMMVTGGLDCKSNVF.

It belongs to the WD repeat LIS1/nudF family. In terms of assembly, self-associates. Interacts with NDL1 and dynein.

Its subcellular location is the cytoplasm. It is found in the cytoskeleton. The protein resides in the spindle pole. Functionally, positively regulates the activity of the minus-end directed microtubule motor protein dynein. Plays a central role in positioning the mitotic spindle at the bud neck during cell division. Targets cytoplasmic dynein to microtubule plus ends, thereby promoting dynein-mediated microtubule sliding along the bud cortex and consequently the movement of the mitotic spindle to the bud neck. The protein is Nuclear distribution protein PAC1 of Saccharomyces cerevisiae (strain YJM789) (Baker's yeast).